The sequence spans 152 residues: Probable ribose-5-phosphate isomerase B (152 aa).

10–11 contacts D-ribulose 5-phosphate; the sequence is DH. C69 serves as the catalytic Proton acceptor. 70-74 is a binding site for D-ribulose 5-phosphate; sequence GTGVG. The active-site Proton donor is the H102. D103, R113, R136, and R140 together coordinate D-ribulose 5-phosphate.

It belongs to the LacAB/RpiB family. In terms of assembly, homodimer.

The catalysed reaction is aldehydo-D-ribose 5-phosphate = D-ribulose 5-phosphate. It functions in the pathway carbohydrate degradation; pentose phosphate pathway; D-ribose 5-phosphate from D-ribulose 5-phosphate (non-oxidative stage): step 1/1. Catalyzes the interconversion of ribulose-5-P and ribose-5-P. The polypeptide is Probable ribose-5-phosphate isomerase B (Mycoplasma genitalium (strain ATCC 33530 / DSM 19775 / NCTC 10195 / G37) (Mycoplasmoides genitalium)).